The primary structure comprises 191 residues: tRNA-specific adenosine deaminase 2 (191 aa).

Residues 20-145 (EETEKWMEEA…SVLNIASADL (126 aa)) enclose the CMP/dCMP-type deaminase domain. H71 provides a ligand contact to Zn(2+). E73 serves as the catalytic Proton donor. Zn(2+) is bound by residues C107 and C110.

This sequence belongs to the cytidine and deoxycytidylate deaminase family. ADAT2 subfamily. The cofactor is Zn(2+).

The enzyme catalyses adenosine(34) in tRNA + H2O + H(+) = inosine(34) in tRNA + NH4(+). Its function is as follows. Probably participates in deamination of adenosine-34 to inosine in many tRNAs. The chain is tRNA-specific adenosine deaminase 2 (ADAT2) from Homo sapiens (Human).